The chain runs to 754 residues: Leucine-rich repeat-containing protein 36 (754 aa).

LRR repeat units follow at residues 51–72 and 73–94; these read NLRS…QYLC and SLQD…SRLQ. The LRRCT domain maps to 107 to 146; that stretch reads NPVVRKDTDYRLFAVYTLQTLEKLDDRTVREGERKAAKLH. The segment covering 241–255 has biased composition (basic and acidic residues); the sequence is REMPSDNHQEDEFRH. A disordered region spans residues 241 to 270; that stretch reads REMPSDNHQEDEFRHYSPRQSTVRSPEKMT. Positions 600–680 form a coiled coil; that stretch reads NDMESLKQKL…EKTVAILHES (81 aa). Positions 702–734 are disordered; sequence YSGKALLPPEKGHHLGRSSPFGKSTLSSSSPVA. Residues 722 to 732 show a composition bias toward polar residues; it reads FGKSTLSSSSP.

This chain is Leucine-rich repeat-containing protein 36 (LRRC36), found in Homo sapiens (Human).